The primary structure comprises 695 residues: MEMRLNAASIWLLILSYGATIAQGERTRDKMYEPIGGASCFRRLNGTHQTGCSSTYSGSVGVLHLINVEADLEFLLSSPPSPPYAPMIPPHLFTRNNLMRLKEAGPKNISVVLLINRTNQMKQFSHELNCPNQYSGLNSTSETCDASNPAKNWNPWGTGLLHEDFPFPIYYIADLDQVTKLEKCFQDFNNHNYETHALRSLCAVEVKSFMSAAVNTEVCMRRTNFINNLGGSKYCDPLEGRNVYATLYPRKPAIENNLETVHTNEKFILVTCRLDTTTMFDGVGLGAMDSLMGFAVFTHVAYLLKQLLPPQSKDLHNVLFVTFNGESYDYIGSQRFVYDMEKLQFPTESTGTPPIAFDNIDFMLDIGTLDDISNIKLHALNGTTLAQQILERLNNYAKSPRYGFNLNIQSEMSAHLPPTSAQSFLRRDPNFNALILNARPTNKYYHSIYDDADNVDFTYANTSKDFTQLTEVNDFKSLNPDSLQMKVRNVSSIVAMALYQTITGKEYTGTKVANPLMADEFLYCFLQSADCPLFKAASYPGSQLTNLPPMRYISVLGGSQESSGYTYRLLGYLLSQLQPDIHRDNCTDLPLHYFAGFNNIGECRLTTQNYSHALSPAFLIDGYDWSSGMYSTWTESTWSQFSARIFLRPSNVHQVTTLSVGIVVLIISFCLVYIISSRSEVLFEDLPASNAALFG.

Residues M1–A22 form the signal peptide. Topologically, residues Q23–Q654 are extracellular. Residues N45, N108, N116, N138, N381, N461, N489, N585, and N609 are each glycosylated (N-linked (GlcNAc...) asparagine). Residues V655–I675 form a helical membrane-spanning segment. Topologically, residues S676–G695 are cytoplasmic.

This sequence belongs to the nicastrin family. In terms of assembly, component of the gamma-secretase complex, a complex composed of a presenilin (Psn) homodimer, nicastrin (Nct), Aph-1 and Pen-2.

It is found in the membrane. Functionally, essential subunit of the gamma-secretase complex, an endoprotease complex that catalyzes the intramembrane cleavage of integral membrane proteins such as Notch. It probably represents a stabilizing cofactor required for the assembly of the gamma-secretase complex. The protein is Nicastrin of Drosophila melanogaster (Fruit fly).